Here is a 346-residue protein sequence, read N- to C-terminus: Holliday junction branch migration complex subunit RuvB (346 aa).

A large ATPase domain (RuvB-L) region spans residues 1 to 181 (MSDRNPLIDA…FGIPVRLNFY (181 aa)). ATP is bound by residues Leu20, Arg21, Gly62, Lys65, Thr66, Thr67, 128 to 130 (EDF), Arg171, Tyr181, and Arg218. Thr66 contributes to the Mg(2+) binding site. Residues 182 to 252 (TVEELEYIVR…IADEALSRLE (71 aa)) form a small ATPAse domain (RuvB-S) region. The head domain (RuvB-H) stretch occupies residues 255–346 (NRGLDQLDRR…SQYGLFMEDE (92 aa)). The DNA site is built by Arg291, Arg310, and Arg315.

It belongs to the RuvB family. As to quaternary structure, homohexamer. Forms an RuvA(8)-RuvB(12)-Holliday junction (HJ) complex. HJ DNA is sandwiched between 2 RuvA tetramers; dsDNA enters through RuvA and exits via RuvB. An RuvB hexamer assembles on each DNA strand where it exits the tetramer. Each RuvB hexamer is contacted by two RuvA subunits (via domain III) on 2 adjacent RuvB subunits; this complex drives branch migration. In the full resolvosome a probable DNA-RuvA(4)-RuvB(12)-RuvC(2) complex forms which resolves the HJ.

Its subcellular location is the cytoplasm. The catalysed reaction is ATP + H2O = ADP + phosphate + H(+). The RuvA-RuvB-RuvC complex processes Holliday junction (HJ) DNA during genetic recombination and DNA repair, while the RuvA-RuvB complex plays an important role in the rescue of blocked DNA replication forks via replication fork reversal (RFR). RuvA specifically binds to HJ cruciform DNA, conferring on it an open structure. The RuvB hexamer acts as an ATP-dependent pump, pulling dsDNA into and through the RuvAB complex. RuvB forms 2 homohexamers on either side of HJ DNA bound by 1 or 2 RuvA tetramers; 4 subunits per hexamer contact DNA at a time. Coordinated motions by a converter formed by DNA-disengaged RuvB subunits stimulates ATP hydrolysis and nucleotide exchange. Immobilization of the converter enables RuvB to convert the ATP-contained energy into a lever motion, pulling 2 nucleotides of DNA out of the RuvA tetramer per ATP hydrolyzed, thus driving DNA branch migration. The RuvB motors rotate together with the DNA substrate, which together with the progressing nucleotide cycle form the mechanistic basis for DNA recombination by continuous HJ branch migration. Branch migration allows RuvC to scan DNA until it finds its consensus sequence, where it cleaves and resolves cruciform DNA. The polypeptide is Holliday junction branch migration complex subunit RuvB (Brucella melitensis biotype 2 (strain ATCC 23457)).